Consider the following 465-residue polypeptide: MAP kinase-interacting serine/threonine-protein kinase 2 (465 aa).

The tract at residues 23–72 (ELAFSLDQPDHGDSDFGLQCSARPDMPASQPIDIPDAKKRGKKKKRGRAT) is disordered. Residues 60-66 (KKRGKKK) carry the Nuclear localization signal motif. Ser-74 is modified (phosphoserine). Residues 84-388 (QLQEDVLGEG…TPMVLQRNSC (305 aa)) form the Protein kinase domain. Residues 90-98 (LGEGAHARV) and Lys-113 each bind ATP. 160-162 (EKM) is a binding site for staurosporine. Asp-205 functions as the Proton acceptor in the catalytic mechanism. Glu-209 is a staurosporine binding site. Phosphothreonine occurs at positions 244 and 249. Zn(2+) is bound by residues Cys-299, Cys-311, and Cys-314. The residue at position 379 (Thr-379) is a Phosphothreonine. 2 positions are modified to phosphoserine: Ser-437 and Ser-440. The short motif at 444 to 448 (LAQRR) is the MAP kinase binding element. A Phosphoserine modification is found at Ser-452.

Belongs to the protein kinase superfamily. CAMK Ser/Thr protein kinase family. As to quaternary structure, monomer. Interacts with the C-terminal regions of EIF4G1 and EIF4G2; this interaction is promoted when MAPK pathways are repressed but repressed upon ERK proteins activation. Also binds to dephosphorylated MAPK3/ERK1 and MAPK1/ERK2. Isoform 1 interaction with phosphorylated MAPK3/ERK1 and MAPK1/ERK2 protects it from dephosphorylation and inactivation. Isoform 2 interacts with ESR2 and EIF4E in the nucleus. It depends on Mg(2+) as a cofactor. Requires Zn(2+) as cofactor. In terms of processing, dual phosphorylation of Thr-244 and Thr-249 activates the kinase. Phosphorylation of Thr-379 activates the kinase. Phosphorylated upon arsenic trioxide As(2)O(3) treatment. Phosphorylated by MAPK1/ERK2, MAPK11 and MAPK14. Dephosphorylated by PP2A. In terms of tissue distribution, ubiquitously expressed in all tissues examined. Isoform 2 is expressed at higher levels in the ovary than is isoform 1.

The protein localises to the nucleus. It is found in the PML body. The protein resides in the cytoplasm. It carries out the reaction L-seryl-[protein] + ATP = O-phospho-L-seryl-[protein] + ADP + H(+). The catalysed reaction is L-threonyl-[protein] + ATP = O-phospho-L-threonyl-[protein] + ADP + H(+). Its activity is regulated as follows. Inhibited by CGP57380 and staurosporine. Activated by phosphorylation in a negative-feedback regulatory manner in response to chemotherapy (e.g. cytarabine) and thus impairs the generation of antileukemic responses. Its function is as follows. Serine/threonine-protein kinase that phosphorylates SFPQ/PSF, HNRNPA1 and EIF4E. May play a role in the response to environmental stress and cytokines. Appears to regulate translation by phosphorylating EIF4E, thus increasing the affinity of this protein for the 7-methylguanosine-containing mRNA cap. Required for mediating PP2A-inhibition-induced EIF4E phosphorylation. Triggers EIF4E shuttling from cytoplasm to nucleus. Isoform 1 displays a high basal kinase activity, but isoform 2 exhibits a very low kinase activity. Acts as a mediator of the suppressive effects of IFNgamma on hematopoiesis. Negative regulator for signals that control generation of arsenic trioxide As(2)O(3)-dependent apoptosis and anti-leukemic responses. Involved in anti-apoptotic signaling in response to serum withdrawal. The polypeptide is MAP kinase-interacting serine/threonine-protein kinase 2 (MKNK2) (Homo sapiens (Human)).